The following is a 172-amino-acid chain: Acetolactate synthase small subunit (172 aa).

The 76-residue stretch at 4–79 (IITLTVVNRS…DVLKVTDITN (76 aa)) folds into the ACT domain.

This sequence belongs to the acetolactate synthase small subunit family. Dimer of large and small chains.

It carries out the reaction 2 pyruvate + H(+) = (2S)-2-acetolactate + CO2. It participates in amino-acid biosynthesis; L-isoleucine biosynthesis; L-isoleucine from 2-oxobutanoate: step 1/4. It functions in the pathway amino-acid biosynthesis; L-valine biosynthesis; L-valine from pyruvate: step 1/4. This is Acetolactate synthase small subunit (ilvH) from Bacillus subtilis (strain 168).